Here is a 1217-residue protein sequence, read N- to C-terminus: Genetic suppressor element 1 (1217 aa).

A disordered region spans residues 1–155 (MKGMSHEPKS…SRSSSGGRER (155 aa)). At Ser-10 the chain carries Phosphoserine. A compositionally biased stretch (polar residues) spans 15–33 (MLSTATRTTATVNPLTPSP). Low complexity-rich tracts occupy residues 43–63 (SPAT…FAAA) and 76–89 (GSSL…VSSP). Phosphoserine is present on residues Ser-84 and Ser-95. A compositionally biased stretch (low complexity) spans 103–114 (VPMGPIIVPPGG). Asymmetric dimethylarginine is present on Arg-305. Residues 321 to 403 (ERMSGLSAER…REKELLAAKA (83 aa)) adopt a coiled-coil conformation. Disordered stretches follow at residues 324-385 (SGLS…EREL) and 418-465 (RGHA…HHTV). Over residues 331–385 (LQMDEELRREREREREREREREADREREKEREREREKEREQEKEREREKEREREL) the composition is skewed to basic and acidic residues. At Thr-433 the chain carries Phosphothreonine. The span at 450–465 (PVQHPLHPVPTPHHTV) shows a compositional bias: low complexity. Lys-496 is modified (N6-acetyllysine). 3 disordered regions span residues 526–579 (HLDM…QLHA), 633–675 (KAEE…GPFL), and 699–720 (FGEL…PRAP). Basic and acidic residues-rich tracts occupy residues 551-561 (NRHEPGGRDPP) and 633-645 (KAEE…EPAP). Residues 711-720 (PYRPPVPRAP) show a composition bias toward pro residues. Lys-739 carries the N6-acetyllysine modification. Ser-766 carries the phosphoserine modification. Disordered stretches follow at residues 807–858 (KEEL…NNSP), 903–930 (ADSL…SLDV), 948–981 (EPGK…EAPG), and 1068–1122 (LQSS…PKRK). Residues 813 to 822 (QKRRKRRRML) show a composition bias toward basic residues. Ser-826 and Ser-828 each carry phosphoserine. Composition is skewed to polar residues over residues 831 to 840 (TIQSKRQTPS) and 847 to 858 (TRYSPDEMNNSP). Ser-857 carries the post-translational modification Phosphoserine. Thr-907 is subject to Phosphothreonine. Phosphoserine is present on Ser-909. Residues 1068–1085 (LQSSSRAPPPQHNGQQEP) are compositionally biased toward polar residues. Acidic residues predominate over residues 1099–1117 (RDSEEEEEEDDEDGEDEEE). Position 1101 is a phosphoserine (Ser-1101). Residues 1127–1201 (EAVFEAYQEH…ELDHLRKCLA (75 aa)) adopt a coiled-coil conformation.

As to quaternary structure, may be a component of a BHC histone deacetylase complex that contains HDAC1, HDAC2, HMG20B/BRAF35, KDM1A, RCOR1/CoREST, PHF21A/BHC80, ZMYM2, ZNF217, ZMYM3, GSE1 and GTF2I.

The sequence is that of Genetic suppressor element 1 (GSE1) from Homo sapiens (Human).